A 299-amino-acid chain; its full sequence is 11-beta-hydroxysteroid dehydrogenase-like 4A (299 aa).

A helical; Signal-anchor for type II membrane protein membrane pass occupies residues 10 to 30 (ILLPIVTVSFLLVFMPFSIFF). Residues 54-80 (GSSSGIGEHLAYEYARRGAYLTLVARR) and Asp105 each bind NADP(+). A substrate-binding site is contributed by Ser184. The Proton acceptor role is filled by Tyr197. Residues 197-201 (YAASK) and Lys201 contribute to the NADP(+) site.

The protein belongs to the short-chain dehydrogenases/reductases (SDR) family.

The protein resides in the membrane. The polypeptide is 11-beta-hydroxysteroid dehydrogenase-like 4A (HSD4) (Arabidopsis thaliana (Mouse-ear cress)).